The chain runs to 114 residues: Putative antiporter subunit mnhC2 (114 aa).

A run of 3 helical transmembrane segments spans residues 3–23 (LILLLVIGFLVFIGTYMILSI), 28–48 (IVIGISIYTHAGNLIIMSMGT), and 72–92 (AIVLTAIVIGFGMTAFLLVLV).

This sequence belongs to the CPA3 antiporters (TC 2.A.63) subunit C family. As to quaternary structure, may form a heterooligomeric complex that consists of seven subunits: mnhA2, mnhB2, mnhC2, mnhD2, mnhE2, mnhF2 and mnhG2.

Its subcellular location is the cell membrane. This chain is Putative antiporter subunit mnhC2 (mnhC2), found in Staphylococcus aureus (strain Mu3 / ATCC 700698).